A 579-amino-acid chain; its full sequence is Viral transcription factor IE2 (579 aa).

Basic and acidic residues predominate over residues 1–11 (MESSAKRKMDP). Disordered stretches follow at residues 1 to 30 (MESS…TPVT) and 99 to 161 (DSSS…VIIK). The span at 99 to 133 (DSSSTGPTLTTHSCSVSSAPLNKPTPTSVAVTNTP) shows a compositional bias: polar residues. Glycyl lysine isopeptide (Lys-Gly) (interchain with G-Cter in SUMO) cross-links involve residues lysine 175 and lysine 180. Positions 199 to 202 (CIVI) match the SUMO-interacting motif 1/SIM1 motif. The segment at 200–208 (IVISDSEEE) is non-covalent SUMO1 binding region (SIM). A phosphoserine mark is found at serine 203 and serine 205. The interval 206–335 (EEEQGEEVET…SKRISELDNE (130 aa)) is disordered. Composition is skewed to low complexity over residues 216-236 (RGAT…TSPT), 259-270 (SSSSSSCSSASD), and 301-316 (AASS…SSGG). An SUMO-interacting motif 1/SIM2 motif is present at residues 409–412 (IQII). The short motif at 500 to 503 (VDLL) is the SUMO-interacting motif 1/SIM3 element.

It belongs to the HHV-5 IE2 protein family. As to quaternary structure, interacts with host SUMO-modified form of TATA-binding protein (TBP)-associated factor 12/TAF12 in a SIM-dependent manner; this interaction increases the transactivation activity of IE2. Interacts with host CHAF1A. Interacts with several components of the host transcriptional machinery including TBP, TF2B and CREB1. Interacts with host DNA replication licensing factor MCM3. Interacts with host PLSCR1; this interaction inhibits IE2 transactivating activity. Post-translationally, phosphorylated by host CK2 at Ser-203 and Ser-205; leading to enhanced SUMOylation. In terms of processing, SUMOylated; SUMOylation is enhanced when IE2 is phosphorylated by host CK2. The sumoylation is necessary for efficient replication of the virus and thus for the function of this viral transcription factor.

It is found in the host nucleus. Stimulates viral early and late gene expression and thus play a crucial role in the regulation of productive infection. Selectively drives host RNA Pol II transcription initiation at a subset of viral early-late and late promoters without substantially affecting Pol II transcription of expressed host genes. Mechanistically, forms a repressive complex at the major immediate-early promoter region involving direct association with host nucleosomes and TBP. Concerning activation, stimulates transcription by binding nearby, but not within, core promoter regions. In addition, activates quiescent cells to reenter the cell cycle and up-regulates several E2F-responsive genes, which are responsible for pushing the cell into S phase. In S-phase, inhibits cellular DNA synthesis and blocks further cell cycle progression. This is Viral transcription factor IE2 (UL122) from Homo sapiens (Human).